Here is a 39-residue protein sequence, read N- to C-terminus: Photosystem II reaction center protein Y (39 aa).

Residues 5–23 (VLVVVGPLLIAASWAVFNI) form a helical membrane-spanning segment.

It belongs to the PsbY family. In terms of assembly, PSII is composed of 1 copy each of membrane proteins PsbA, PsbB, PsbC, PsbD, PsbE, PsbF, PsbH, PsbI, PsbJ, PsbK, PsbL, PsbM, PsbT, PsbX, PsbY, PsbZ, Psb30/Ycf12, peripheral proteins PsbO, CyanoQ (PsbQ), PsbU, PsbV and a large number of cofactors. It forms dimeric complexes.

It localises to the cellular thylakoid membrane. In terms of biological role, loosely associated component of the core of photosystem II (PSII), it is not always seen in crystals. PSII is a light-driven water plastoquinone oxidoreductase, using light energy to abstract electrons from H(2)O, generating a proton gradient subsequently used for ATP formation. The chain is Photosystem II reaction center protein Y from Rippkaea orientalis (strain PCC 8801 / RF-1) (Cyanothece sp. (strain PCC 8801)).